The sequence spans 162 residues: Glutathione peroxidase-like peroxiredoxin GPX5 (162 aa).

Position 38 is an S-selanylcysteine (Cys-38). The active site involves Asn-87.

It belongs to the glutathione peroxidase family. Post-translationally, cys-87 is S-selanylated when selenium levels are high. S-selanylation may increase or be important for glutathione peroxidase activity.

Its subcellular location is the cytoplasm. The catalysed reaction is 2 glutathione + H2O2 = glutathione disulfide + 2 H2O. The enzyme catalyses a hydroperoxide + [thioredoxin]-dithiol = an alcohol + [thioredoxin]-disulfide + H2O. In terms of biological role, has thioredoxin peroxidase activity. May also have glutathione peroxidase activity, although this activity is controversial. Protects cells against reactive oxygen species, which may include photooxidative stress, hydrogen peroxide and organic hydroperoxides. This chain is Glutathione peroxidase-like peroxiredoxin GPX5, found in Chlamydomonas reinhardtii (Chlamydomonas smithii).